The chain runs to 171 residues: Protein BTG1 (171 aa).

Ser-159 is modified (phosphoserine).

This sequence belongs to the BTG family. In terms of assembly, interacts with CNOT7 and CNOT8.

In terms of biological role, anti-proliferative protein. This Homo sapiens (Human) protein is Protein BTG1 (BTG1).